The chain runs to 402 residues: Probable peptidoglycan glycosyltransferase FtsW (402 aa).

Topologically, residues Met1–Glu24 are cytoplasmic. A helical membrane pass occupies residues Ile25–Thr45. At Ser46 to Ser63 the chain is on the periplasmic side. The helical transmembrane segment at Ile64–Pro84 threads the bilayer. Residues Thr85–Asn91 are Cytoplasmic-facing. A helical membrane pass occupies residues Tyr92–Gly112. Topologically, residues Lys113–Trp121 are periplasmic. The helical transmembrane segment at Ile122–Phe142 threads the bilayer. The Cytoplasmic segment spans residues Phe143–Gly160. 2 consecutive transmembrane segments (helical) span residues Ile161–Phe181 and Gly182–Val202. Arg203 is a topological domain (cytoplasmic). Residues Trp204–Pro224 form a helical membrane-spanning segment. At Tyr225–Ser284 the chain is on the periplasmic side. The chain crosses the membrane as a helical span at residues Val285–Ile305. Residues Val306–Gln324 lie on the Cytoplasmic side of the membrane. The helical transmembrane segment at Ala325 to Val345 threads the bilayer. Residues Asn346 to Leu357 are Periplasmic-facing. A helical membrane pass occupies residues Pro358–Val378. The Cytoplasmic segment spans residues Arg379–Lys402.

The protein belongs to the SEDS family. FtsW subfamily.

It localises to the cell inner membrane. The enzyme catalyses [GlcNAc-(1-&gt;4)-Mur2Ac(oyl-L-Ala-gamma-D-Glu-L-Lys-D-Ala-D-Ala)](n)-di-trans,octa-cis-undecaprenyl diphosphate + beta-D-GlcNAc-(1-&gt;4)-Mur2Ac(oyl-L-Ala-gamma-D-Glu-L-Lys-D-Ala-D-Ala)-di-trans,octa-cis-undecaprenyl diphosphate = [GlcNAc-(1-&gt;4)-Mur2Ac(oyl-L-Ala-gamma-D-Glu-L-Lys-D-Ala-D-Ala)](n+1)-di-trans,octa-cis-undecaprenyl diphosphate + di-trans,octa-cis-undecaprenyl diphosphate + H(+). It participates in cell wall biogenesis; peptidoglycan biosynthesis. In terms of biological role, peptidoglycan polymerase that is essential for cell division. The polypeptide is Probable peptidoglycan glycosyltransferase FtsW (Francisella salina).